Here is a 332-residue protein sequence, read N- to C-terminus: MALLCYNRACGQRFDPETNSDDACTYHPGVPVFHDALKGWSCCKRRTTDFSDFLSIVGCTKGRHNSEKPPEPVKPEVKTTEKKELSELKPKFQEHIIQAPKPVEAIKRPSPDEPMTNLELKISASLKQALDKLKLSSGNEEDKKEEDNDEIKIGTSCKNGGCSKTYRGLESLEEVCVYHSGVPIFHEGMKYWSCCRRKTSDFNTFLAQEGCTKGRHMWTKKDAGKKVVPCRHDWHQTGGEVTISVYAKNSLPELSRVEANSTLLNVHIVFEGEKEFDQNVKLWGVIDVKRSYVTMTATKIEINMRKAEPMQWASLELPAAKKQEKQKDDTTD.

Alanine 2 carries the N-acetylalanine modification. The segment at alanine 2 to valine 77 is interaction with PPP5C. Zn(2+) contacts are provided by cysteine 5, cysteine 10, cysteine 24, histidine 27, cysteine 42, and cysteine 43. CHORD domains are found at residues cysteine 5–histidine 64 and cysteine 157–histidine 216. Threonine 47 carries the phosphothreonine modification. Serine 51 is modified (phosphoserine). Residues cysteine 59, histidine 64, cysteine 157, cysteine 162, cysteine 176, histidine 179, cysteine 194, cysteine 195, cysteine 211, and histidine 216 each coordinate Zn(2+). Residues glycine 62–lysine 82 form a disordered region. The segment covering histidine 64–lysine 82 has biased composition (basic and acidic residues). Positions asparagine 65–glutamate 316 are interaction with HSP90AA1 and HSP90AB1. The region spanning valine 227–glutamate 316 is the CS domain.

In terms of assembly, interacts with HSP90AA1, HSP90AB1, PPP5C, ROCK1 and ROCK2.

Its function is as follows. Regulates centrosome duplication, probably by inhibiting the kinase activity of ROCK2. Proposed to act as co-chaperone for HSP90. May play a role in the regulation of NOD1 via a HSP90 chaperone complex. In vitro, has intrinsic chaperone activity. This function may be achieved by inhibiting association of ROCK2 with NPM1. Plays a role in ensuring the localization of the tyrosine kinase receptor EGFR to the plasma membrane, and thus ensures the subsequent regulation of EGFR activity and EGF-induced actin cytoskeleton remodeling. Involved in stress response. Prevents tumorigenesis. The polypeptide is Cysteine and histidine-rich domain-containing protein 1 (CHORDC1) (Macaca fascicularis (Crab-eating macaque)).